Consider the following 593-residue polypeptide: MNELIKHKLELLPDSPGCYLHKDKNGTIIYVGKAKNLKNRVRSYFHGSHNTKTELLVSEIEDFEYIVTTSNTEALLLEINLIQENMPKYNIRLKDDKSYPYIKITNERYPRLMITRQVKKSDGTYFGPYPDSGAATEIKRLLDRLFPFKKCTNPANKVCFYYHLGQCNAHTVCQTNKAYWDSLREDVKQFLNGKDNKIVNGLTEKMKSAAMTMEFERAAEYRDLIEAISLLRTKQRVIHQDMKDRDVFGYFVDKGWMCVQVFFVRNGKLIQRDVNMFPYYNEPEEDFLTYIGQFYQDTKHFLPKEVFIPQDIDAKSVETIVGCKIVKPQRGEKKQLVNLAIKNARVSLQQKFDLLEKDIRKTHGAIENLGNLLNIPKPVRIEAFDNSNIQGTSPVAAMVVFVNGKPSKKDYRKFKIKTVIGPDDYASMREVIHRRYSRVLKDGLTPPDLIVIDGGQGQVNIARDVIENQLGLAIPIAGLQKNDKHQTHELLFGDPLEVVELPRNSEEFFLLHRIQDEVHRFAITFHRQLRSKNSFSSKLDGITGLGPKRKQLLMKHFKSLPNIQKADIEDIIMCGIPRTVAESLRDSLNDPPK.

Residues 14 to 91 (DSPGCYLHKD…IQENMPKYNI (78 aa)) enclose the GIY-YIG domain. Positions 196–231 (NKIVNGLTEKMKSAAMTMEFERAAEYRDLIEAISLL) constitute a UVR domain.

The protein belongs to the UvrC family. Interacts with UvrB in an incision complex.

The protein resides in the cytoplasm. Functionally, the UvrABC repair system catalyzes the recognition and processing of DNA lesions. UvrC both incises the 5' and 3' sides of the lesion. The N-terminal half is responsible for the 3' incision and the C-terminal half is responsible for the 5' incision. The protein is UvrABC system protein C of Streptococcus agalactiae serotype Ia (strain ATCC 27591 / A909 / CDC SS700).